The following is a 249-amino-acid chain: Chromosome segregation and cytokinesis defective protein 1 (249 aa).

Residues 12 to 48 (VVAMADTLETRVKDLLEEYKKKLREVALQTAKAESDR) adopt a coiled-coil conformation. 3 disordered regions span residues 70 to 89 (PDDFYIESGEEEEEGEAAVA), 94 to 183 (LPSE…PEKP), and 208 to 249 (TTAT…GTSV). Positions 73 to 85 (FYIESGEEEEEGE) are enriched in acidic residues. Residues 109-126 (QKTSIPIGQNSGRNTVQV) are compositionally biased toward polar residues. The segment covering 224 to 236 (SGAASKKAAAAAG) has biased composition (low complexity).

It belongs to the borealin family. Highly divergent. In terms of assembly, component of the CPC complex which consists of icp-1; csc-1; bir-1 and air-2. Within the complex interacts with Aurora B/air-2, bir-1 and icp-1.

The protein resides in the nucleus. Its subcellular location is the chromosome. The protein localises to the centromere. It is found in the cytoplasm. It localises to the cytoskeleton. The protein resides in the spindle. In terms of biological role, component of the chromosomal passenger complex (CPC), a complex that acts as a key regulator of chromosome segregation and cytokinesis during mitosis. The CPC complex has essential functions at the centromere in ensuring correct chromosome alignment and segregation. In the complex, it may be required to direct the Aurora B/air-2 to centromeric DNA. The chain is Chromosome segregation and cytokinesis defective protein 1 (csc-1) from Caenorhabditis elegans.